A 3068-amino-acid chain; its full sequence is Highly reducing polyketide synthase 17 (3068 aa).

The region spanning 100 to 526 (IEPIAIVGAS…GTNAHAIMER (427 aa)) is the Ketosynthase family 3 (KS3) domain. Active-site for beta-ketoacyl synthase activity residues include Cys274, His410, and His449. Residues 627–938 (YVFTGQGAQW…LAGPIRQCLA (312 aa)) are malonyl-CoA:ACP transacylase (MAT) domain. The For malonyltransferase activity role is filled by Ser721. The N-terminal hotdog fold stretch occupies residues 1027–1160 (HHLLGVRMTE…GVVEGVMTLD (134 aa)). Positions 1027–1311 (HHLLGVRMTE…RASNIDMTIV (285 aa)) are dehydratase (DH) domain. The PKS/mFAS DH domain maps to 1027 to 1334 (HHLLGVRMTE…SRSLAAHVDG (308 aa)). The active-site Proton acceptor; for dehydratase activity is the His1059. The interval 1179–1334 (NRTMVIPEEL…SRSLAAHVDG (156 aa)) is C-terminal hotdog fold. Asp1247 acts as the Proton donor; for dehydratase activity in catalysis. The tract at residues 1735–2037 (LGPVQSSKGD…LVRQGGKVIL (303 aa)) is enoylreductase (ER) domain. The catalytic ketoreductase (KR) domain stretch occupies residues 2062 to 2240 (AAYVVAGGMG…FLSMNIGWIE (179 aa)). The Carrier domain occupies 2345–2423 (TIIDFISSAI…DLAEKVASRS (79 aa)). Ser2383 is subject to O-(pantetheine 4'-phosphoryl)serine. The interval 2831 to 3062 (FDVASLGLRS…SCMITSLLED (232 aa)) is choline/carnitine acyltransferase (cAT) domain.

The protein operates within secondary metabolite biosynthesis. Its function is as follows. Highly reducing polyketide synthase; part of the gene cluster that mediates the biosynthesis of (2Z,4E,6E,10E)-9-hydroxydodeca-2,4,6,10-tetraenoic acid (BAA), (2E,4E,6E,10E)-9-hydroxydodeca-2,4,6,10-tetraenoic acid (BAB), and (2Z,4E,6E)-octa-2,4,6-trienedioic acid (PBA). The highly reducing polyketide synthase Ba17a is sufficent to produce PBA and BAA. The still to be characterized protein Ba17b leads to an increased production of BAA as well as to the production of the new compound BAB. BAA does not possess insecticidal activity against G.mellonella larvae, however, both BAA and BAB increase the growth of Candida albicans and BAA can mitigate the fungicidal effects of fluconazole over C.albicans, suggesting that generalist pathogens such as M.anisopliae, can potentially manipulate the yeast microbiota found in arthropods (and anywhere else) by the activity of compounds as BAA and BAB. The chain is Highly reducing polyketide synthase 17 from Metarhizium anisopliae (Entomophthora anisopliae).